The following is a 519-amino-acid chain: C-glycoside 3-oxidase (519 aa).

E41 serves as a coordination point for FAD. Positions 43–93 (GPTVSNPPGAHVKNIEDPERRSHAQRASEGPGAGAETVNSPGAVKSGERRA) are disordered. Over residues 55 to 64 (KNIEDPERRS) the composition is skewed to basic and acidic residues. FAD is bound by residues S118, N120, M124, T129, A131, and V234. The active-site Proton acceptor is H440. FAD-binding residues include N474 and T486.

It belongs to the GMC oxidoreductase family. In terms of assembly, monomer. It depends on FAD as a cofactor.

It catalyses the reaction isovitexin + O2 = 3''-dehydroisovitexin + H2O2. The catalysed reaction is isoorientin + O2 = 3''-dehydroisoorientin + H2O2. The enzyme catalyses mangiferin + O2 = 3'-dehydromangiferin + H2O2. In terms of biological role, FAD-dependent C-glycoside-metabolizing enzyme that participates in the degradation of certain C-glycosides by catalyzing the oxidation of the hydroxyl group at the C3 position of the sugar moiety. Shows oxidase activity toward various C-glycosides such as isovitexin, isoorientin and mangiferin but cannot use carminic acid, puerarin, orientin or aloesin. Shows weak activity (100 to 1000-fold lower) with O-glycosides. Probably plays a crucial role in the metabolism of C-glycosides in nature. This chain is C-glycoside 3-oxidase, found in Arthrobacter globiformis (strain ATCC 8010 / DSM 20124 / JCM 1332 / NBRC 12137 / NCIMB 8907 / NRRL B-2979 / 168).